Here is a 99-residue protein sequence, read N- to C-terminus: Small ribosomal subunit protein bS20 (99 aa).

This sequence belongs to the bacterial ribosomal protein bS20 family.

Binds directly to 16S ribosomal RNA. The polypeptide is Small ribosomal subunit protein bS20 (Caldicellulosiruptor saccharolyticus (strain ATCC 43494 / DSM 8903 / Tp8T 6331)).